Reading from the N-terminus, the 798-residue chain is Translation initiation factor IF-2 (798 aa).

Residues 40 to 207 (SEQETKLRQA…QQESAKPAVP (168 aa)) form a disordered region. The segment covering 57–186 (NTQSKATNNQ…RNNFNNQNRN (130 aa)) has biased composition (low complexity). Over residues 187 to 196 (RFNKKGKKGK) the composition is skewed to basic residues. The tr-type G domain occupies 300-469 (TRPPVVTIMG…LLIAEVEDLK (170 aa)). Residues 309-316 (GHVDHGKT) form a G1 region. 309–316 (GHVDHGKT) lines the GTP pocket. Residues 334-338 (GITQH) are G2. The interval 355 to 358 (DTPG) is G3. GTP is bound by residues 355–359 (DTPGH) and 409–412 (NKID). The segment at 409 to 412 (NKID) is G4. Residues 445–447 (SAK) form a G5 region.

This sequence belongs to the TRAFAC class translation factor GTPase superfamily. Classic translation factor GTPase family. IF-2 subfamily.

It is found in the cytoplasm. Its function is as follows. One of the essential components for the initiation of protein synthesis. Protects formylmethionyl-tRNA from spontaneous hydrolysis and promotes its binding to the 30S ribosomal subunits. Also involved in the hydrolysis of GTP during the formation of the 70S ribosomal complex. The sequence is that of Translation initiation factor IF-2 from Enterococcus faecalis (strain ATCC 700802 / V583).